A 213-amino-acid polypeptide reads, in one-letter code: Orotate phosphoribosyltransferase (213 aa).

Position 26 (K26) interacts with 5-phospho-alpha-D-ribose 1-diphosphate. 34-35 serves as a coordination point for orotate; that stretch reads FF. Residues 72–73, R99, K100, K103, H105, and 124–132 each bind 5-phospho-alpha-D-ribose 1-diphosphate; these read YK and DDVITAGTA. Orotate contacts are provided by T128 and R156.

Belongs to the purine/pyrimidine phosphoribosyltransferase family. PyrE subfamily. Homodimer. The cofactor is Mg(2+).

The catalysed reaction is orotidine 5'-phosphate + diphosphate = orotate + 5-phospho-alpha-D-ribose 1-diphosphate. It functions in the pathway pyrimidine metabolism; UMP biosynthesis via de novo pathway; UMP from orotate: step 1/2. Functionally, catalyzes the transfer of a ribosyl phosphate group from 5-phosphoribose 1-diphosphate to orotate, leading to the formation of orotidine monophosphate (OMP). The protein is Orotate phosphoribosyltransferase of Edwardsiella ictaluri (strain 93-146).